The sequence spans 485 residues: NADH-quinone oxidoreductase subunit N (485 aa).

14 helical membrane-spanning segments follow: residues 8–28 (LIAL…MLSI), 35–55 (FLNA…LWFV), 71–91 (GFAM…CTFA), 105–125 (FYLL…ANHL), 127–147 (SLFL…GYAF), 159–179 (YTIL…LVYA), 203–223 (LLAG…LVPF), 235–255 (PAPV…GVVM), 271–291 (VVLA…ALSQ), 297–317 (LLGY…IALQ), 326–346 (VGVY…VVSL), 373–393 (AAVM…LGFI), 408–430 (WWLV…RVAV), and 450–470 (YSAG…LGVW).

Belongs to the complex I subunit 2 family. In terms of assembly, NDH-1 is composed of 13 different subunits. Subunits NuoA, H, J, K, L, M, N constitute the membrane sector of the complex.

The protein resides in the cell inner membrane. It catalyses the reaction a quinone + NADH + 5 H(+)(in) = a quinol + NAD(+) + 4 H(+)(out). In terms of biological role, NDH-1 shuttles electrons from NADH, via FMN and iron-sulfur (Fe-S) centers, to quinones in the respiratory chain. The immediate electron acceptor for the enzyme in this species is believed to be ubiquinone. Couples the redox reaction to proton translocation (for every two electrons transferred, four hydrogen ions are translocated across the cytoplasmic membrane), and thus conserves the redox energy in a proton gradient. The polypeptide is NADH-quinone oxidoreductase subunit N (Shigella boydii serotype 4 (strain Sb227)).